A 225-amino-acid polypeptide reads, in one-letter code: 7-cyano-7-deazaguanine synthase (225 aa).

An ATP-binding site is contributed by 10 to 20; sequence LSGGIDSATAA. The Zn(2+) site is built by C191, C199, C202, and C205.

It belongs to the QueC family. The cofactor is Zn(2+).

It carries out the reaction 7-carboxy-7-deazaguanine + NH4(+) + ATP = 7-cyano-7-deazaguanine + ADP + phosphate + H2O + H(+). Its pathway is purine metabolism; 7-cyano-7-deazaguanine biosynthesis. Catalyzes the ATP-dependent conversion of 7-carboxy-7-deazaguanine (CDG) to 7-cyano-7-deazaguanine (preQ(0)). The polypeptide is 7-cyano-7-deazaguanine synthase (Prochlorococcus marinus (strain NATL2A)).